A 427-amino-acid chain; its full sequence is Adenylosuccinate synthetase (427 aa).

GTP is bound by residues G12–K18 and G40–T42. D13 acts as the Proton acceptor in catalysis. Residues D13 and G40 each contribute to the Mg(2+) site. IMP contacts are provided by residues D13 to K16, N38 to H41, T128, R142, Q223, T238, and R302. H41 functions as the Proton donor in the catalytic mechanism. T298–R304 is a substrate binding site. GTP-binding positions include R304, L330–D332, and S412–G414.

Belongs to the adenylosuccinate synthetase family. As to quaternary structure, homodimer. Requires Mg(2+) as cofactor.

It is found in the cytoplasm. The catalysed reaction is IMP + L-aspartate + GTP = N(6)-(1,2-dicarboxyethyl)-AMP + GDP + phosphate + 2 H(+). It participates in purine metabolism; AMP biosynthesis via de novo pathway; AMP from IMP: step 1/2. Its function is as follows. Plays an important role in the de novo pathway of purine nucleotide biosynthesis. Catalyzes the first committed step in the biosynthesis of AMP from IMP. This is Adenylosuccinate synthetase from Alkaliphilus metalliredigens (strain QYMF).